A 180-amino-acid chain; its full sequence is E3 ubiquitin-protein ligase RNF5 (180 aa).

A2 bears the N-acetylalanine mark. An RING-type zinc finger spans residues 27–68 (CNICLETAREAVVSVCGHLYCWPCLHQWLETRPERQECPVCK). The segment at 79 to 110 (LYGRGSQKPQDPRLKTPPRPQGQRPAPESRGG) is disordered. S84 bears the Phosphoserine mark. T94 is modified (phosphothreonine). S107 carries the post-translational modification Phosphoserine. 2 consecutive transmembrane segments (helical) span residues 118-138 (GGFH…TTVF) and 160-180 (SWQD…LLSI).

The protein belongs to the RNF5 family. As to quaternary structure, interacts with PXN. Interacts with Salmonella typhimurium sopA. Interacts with JKAMP. Interacts with STING1; the interaction of endogenous proteins is dependent on viral infection. As to expression, widely expressed.

The protein localises to the cell membrane. It localises to the mitochondrion membrane. It is found in the endoplasmic reticulum membrane. It carries out the reaction S-ubiquitinyl-[E2 ubiquitin-conjugating enzyme]-L-cysteine + [acceptor protein]-L-lysine = [E2 ubiquitin-conjugating enzyme]-L-cysteine + N(6)-ubiquitinyl-[acceptor protein]-L-lysine.. Its pathway is protein modification; protein ubiquitination. Functionally, membrane-bound E3 ubiquitin-protein ligase that mediates ubiquitination of target proteins. May function together with E2 ubiquitin-conjugating enzymes UBE2D1/UBCH5A and UBE2D2/UBC4. Mediates ubiquitination of PXN/paxillin,thereby regulating cell motility and localization of PXN/paxillin. Catalyzes ubiquitination of Salmonella type III secreted protein sopA. Mediates the 'Lys-63'-linked polyubiquitination of JKAMP thereby regulating JKAMP function by decreasing its association with components of the proteasome and ERAD; the ubiquitination appears to involve E2 ubiquitin-conjugating enzyme UBE2N. Mediates the 'Lys-48'-linked polyubiquitination of STING1 at 'Lys-150' leading to its proteasomal degradation; the ubiquitination occurs in mitochondria after viral transfection and regulates antiviral responses. Catalyzes ubiquitination and subsequent degradation of ATG4B, thereby inhibiting autophagy. This chain is E3 ubiquitin-protein ligase RNF5, found in Homo sapiens (Human).